A 324-amino-acid polypeptide reads, in one-letter code: Antihemorrhagic factor cMSF (324 aa).

The signal sequence occupies residues 1–19 (MHFLVALVLLGQIIGSTLS). 2 Cystatin fetuin-A-type domains span residues 22 to 130 (VRGD…VKCH) and 141 to 254 (RNCL…SDCV). A Cell attachment site motif is present at residues 23 to 25 (RGD). 7 disulfides stabilise this stretch: cysteine 28-cysteine 315, cysteine 85-cysteine 96, cysteine 110-cysteine 129, cysteine 143-cysteine 146, cysteine 205-cysteine 217, cysteine 230-cysteine 253, and cysteine 287-cysteine 291. Asparagine 204 carries an N-linked (GlcNAc...) asparagine glycan. The N-linked (GlcNAc...) asparagine glycan is linked to asparagine 282.

Homodimer. Expressed by the liver.

It localises to the secreted. Suppress hemorrhage induced by metalloproteinases from the same venom (brevilysin-H3, -H4, -H6) and from habu venom (metalloproteinases HR1A and HR1B). The non-hemorrhagic brevilysin-L4 is not inhibited by cMSF. Does not inhibit serine and cysteine proteases such as trypsin, chymotrypsin, thermolysin, and papain. The inhibition may occur by formation of a non-covalent complex between this protein and the proteinases at their metalloproteinase domains. The polypeptide is Antihemorrhagic factor cMSF (Gloydius brevicauda (Korean slamosa snake)).